The following is a 763-amino-acid chain: Phosphoglycerol transferase I (763 aa).

The next 4 helical transmembrane spans lie at Met-1–Ala-21, Trp-26–Tyr-46, Ile-77–Val-97, and Val-108–Phe-128.

This sequence belongs to the OpgB family.

Its subcellular location is the cell inner membrane. The catalysed reaction is a phosphatidylglycerol + a membrane-derived-oligosaccharide D-glucose = a 1,2-diacyl-sn-glycerol + a membrane-derived-oligosaccharide 6-(glycerophospho)-D-glucose.. Its pathway is glycan metabolism; osmoregulated periplasmic glucan (OPG) biosynthesis. Transfers a phosphoglycerol residue from phosphatidylglycerol to the membrane-bound nascent glucan backbones. This chain is Phosphoglycerol transferase I, found in Salmonella heidelberg (strain SL476).